Consider the following 87-residue polypeptide: Bombyxin B-10 (87 aa).

The first 19 residues, 1–19 (MKTILIFLVVISLMYSGEA), serve as a signal peptide directing secretion. 3 cysteine pairs are disulfide-bonded: cysteine 27–cysteine 73, cysteine 39–cysteine 86, and cysteine 72–cysteine 77. Residues 46 to 64 (SGAQYAPYFWTRQYLGSRG) constitute a propeptide, bombyxin B-10 C peptide.

It belongs to the insulin family. As to quaternary structure, heterodimer of a B chain and an A chain linked by two disulfide bonds.

The protein localises to the secreted. In terms of biological role, brain peptide responsible for activation of prothoracic glands to produce ecdysone in insects. This is Bombyxin B-10 (BBXB10) from Bombyx mori (Silk moth).